The chain runs to 482 residues: tRNA sulfurtransferase (482 aa).

The THUMP domain occupies 61–165; the sequence is DVTLAVLTQT…NDKLNLIIAR (105 aa). ATP contacts are provided by residues 183–184, K265, G287, and Q296; that span reads LI. A disulfide bridge links C344 with C456. The region spanning 404–482 is the Rhodanese domain; that stretch reads LGSDVVVLDI…GYKNVKVYRP (79 aa). C456 functions as the Cysteine persulfide intermediate in the catalytic mechanism.

Belongs to the ThiI family.

It is found in the cytoplasm. It carries out the reaction [ThiI sulfur-carrier protein]-S-sulfanyl-L-cysteine + a uridine in tRNA + 2 reduced [2Fe-2S]-[ferredoxin] + ATP + H(+) = [ThiI sulfur-carrier protein]-L-cysteine + a 4-thiouridine in tRNA + 2 oxidized [2Fe-2S]-[ferredoxin] + AMP + diphosphate. It catalyses the reaction [ThiS sulfur-carrier protein]-C-terminal Gly-Gly-AMP + S-sulfanyl-L-cysteinyl-[cysteine desulfurase] + AH2 = [ThiS sulfur-carrier protein]-C-terminal-Gly-aminoethanethioate + L-cysteinyl-[cysteine desulfurase] + A + AMP + 2 H(+). The protein operates within cofactor biosynthesis; thiamine diphosphate biosynthesis. Catalyzes the ATP-dependent transfer of a sulfur to tRNA to produce 4-thiouridine in position 8 of tRNAs, which functions as a near-UV photosensor. Also catalyzes the transfer of sulfur to the sulfur carrier protein ThiS, forming ThiS-thiocarboxylate. This is a step in the synthesis of thiazole, in the thiamine biosynthesis pathway. The sulfur is donated as persulfide by IscS. In Aliivibrio fischeri (strain ATCC 700601 / ES114) (Vibrio fischeri), this protein is tRNA sulfurtransferase.